We begin with the raw amino-acid sequence, 426 residues long: Serine hydroxymethyltransferase (426 aa).

(6S)-5,6,7,8-tetrahydrofolate-binding positions include Leu111 and 115-117; that span reads GHL. Lys220 bears the N6-(pyridoxal phosphate)lysine mark.

It belongs to the SHMT family. Homodimer. Pyridoxal 5'-phosphate is required as a cofactor.

The protein localises to the cytoplasm. The catalysed reaction is (6R)-5,10-methylene-5,6,7,8-tetrahydrofolate + glycine + H2O = (6S)-5,6,7,8-tetrahydrofolate + L-serine. The protein operates within one-carbon metabolism; tetrahydrofolate interconversion. It participates in amino-acid biosynthesis; glycine biosynthesis; glycine from L-serine: step 1/1. Its function is as follows. Catalyzes the reversible interconversion of serine and glycine with tetrahydrofolate (THF) serving as the one-carbon carrier. This reaction serves as the major source of one-carbon groups required for the biosynthesis of purines, thymidylate, methionine, and other important biomolecules. Also exhibits THF-independent aldolase activity toward beta-hydroxyamino acids, producing glycine and aldehydes, via a retro-aldol mechanism. In Orientia tsutsugamushi (strain Ikeda) (Rickettsia tsutsugamushi), this protein is Serine hydroxymethyltransferase.